The chain runs to 222 residues: MGQKVHPKGLRIGIIKDWDAKWFADKKHYQELLHEDLKIRKYIKTKFYQAGISRIVIERASNRVKVTIHTARPGMVIGKGGTEIEVLRKELEKMTGKQININIAEIKVPEIDAQLVAENIAAQIEKRISYKRAMKQAVSRALKMGAQGIKVACSGRLAGAEIARSEWYSEGKVPLTTLRADIDYGFAEALTTYGKIGVKVWIYKGEVLPEVKKESVSTEGGE.

The region spanning 39–107 is the KH type-2 domain; the sequence is IRKYIKTKFY…QININIAEIK (69 aa).

The protein belongs to the universal ribosomal protein uS3 family. In terms of assembly, part of the 30S ribosomal subunit. Forms a tight complex with proteins S10 and S14.

Functionally, binds the lower part of the 30S subunit head. Binds mRNA in the 70S ribosome, positioning it for translation. The sequence is that of Small ribosomal subunit protein uS3 from Carboxydothermus hydrogenoformans (strain ATCC BAA-161 / DSM 6008 / Z-2901).